The following is a 148-amino-acid chain: Large-conductance mechanosensitive channel (148 aa).

The next 2 membrane-spanning stretches (helical) occupy residues 16–36 (VMDL…VNSI) and 89–109 (GSFI…FLMV).

Belongs to the MscL family. As to quaternary structure, homopentamer.

The protein localises to the cell inner membrane. Channel that opens in response to stretch forces in the membrane lipid bilayer. May participate in the regulation of osmotic pressure changes within the cell. The chain is Large-conductance mechanosensitive channel from Paraburkholderia phytofirmans (strain DSM 17436 / LMG 22146 / PsJN) (Burkholderia phytofirmans).